Here is an 86-residue protein sequence, read N- to C-terminus: High affinity immunoglobulin epsilon receptor subunit gamma (86 aa).

Residues 1 to 18 (MYPAVVLLLLLLVEQAAA) form the signal peptide. Residues 19 to 23 (LGEPQ) lie on the Extracellular side of the membrane. A helical membrane pass occupies residues 24 to 44 (LCYILDAILFLYGIILTLLYC). The Cytoplasmic portion of the chain corresponds to 45–86 (RLKIQVRKATVASYEKPDGIYTGLSTRNQETYETLKHEKPPQ). Residues 54 to 82 (TVASYEKPDGIYTGLSTRNQETYETLKHE) form the ITAM domain. Tyr-65 is modified (phosphotyrosine). Ser-69 is modified (phosphoserine). Tyr-76 is subject to Phosphotyrosine. The residue at position 78 (Thr-78) is a Phosphothreonine.

It belongs to the CD3Z/FCER1G family. In terms of assembly, igE Fc receptor is a tetramer of an alpha chain, a beta chain, and two disulfide linked gamma chains. Associates with FCGR1A; forms a functional signaling complex. The signaling subunit of immunoglobulin gamma (IgG) Fc receptor complex. As a homodimer or a heterodimer of CD247 and FCER1G, associates with the ligand binding subunit FCGR3A to form a functional receptor complex. Associates with CLEC6A. Interacts with CLEC4E. Interacts (via ITAM domain) with SYK (via SH2 domains); activates SYK, enabling integrin-mediated activation of neutrophils and macrophages. Interacts with CSF2RB and recruits SYK in response to IL3 stimulation; this interaction is direct. Interacts with CD300LH; the interaction may be indirect. Interacts with CD300LD. Interacts with TARM1.

Its subcellular location is the cell membrane. In terms of biological role, adapter protein containing an immunoreceptor tyrosine-based activation motif (ITAM) that transduces activation signals from various immunoreceptors. As a component of the high-affinity immunoglobulin E (IgE) receptor, mediates allergic inflammatory signaling in mast cells. As a constitutive component of interleukin-3 receptor complex, selectively mediates interleukin 4/IL4 production by basophils priming T-cells toward effector T-helper 2 subset. Associates with pattern recognition receptors CLEC4D and CLEC4E to form a functional signaling complex in myeloid cells. Binding of mycobacterial trehalose 6,6'-dimycolate (TDM) to this receptor complex leads to phosphorylation of ITAM, triggering activation of SYK, CARD9 and NF-kappa-B, consequently driving maturation of antigen-presenting cells and shaping antigen-specific priming of T-cells toward effector T-helper 1 and T-helper 17 cell subtypes. May function cooperatively with other activating receptors. Functionally linked to integrin beta-2/ITGB2-mediated neutrophil activation. Also involved in integrin alpha-2/ITGA2-mediated platelet activation. In Cavia porcellus (Guinea pig), this protein is High affinity immunoglobulin epsilon receptor subunit gamma (FCER1G).